The primary structure comprises 66 residues: Antimicrobial peptide Eval967 (66 aa).

Residues 1–22 form the signal peptide; it reads MKFSALLPVFFLLLAVIDYCQA. The residue at position 36 (L36) is a Leucine amide. The propeptide occupies 37-66; the sequence is GKRDVKTQKYVDIKRRDLDLDDMLSKLFED.

The protein belongs to the non-disulfide-bridged peptide (NDBP) superfamily. Short antimicrobial peptide (group 4) family. Expressed by the venom gland.

It localises to the secreted. Functionally, probable antimicrobial peptide. Has no inhibitory activity against herpes simplex virus type 1 (HSV-1). The polypeptide is Antimicrobial peptide Eval967 (Euscorpiops validus (Scorpion)).